A 236-amino-acid polypeptide reads, in one-letter code: Purine nucleoside phosphorylase DeoD-type (236 aa).

His4 serves as a coordination point for a purine D-ribonucleoside. Phosphate contacts are provided by residues Gly20, Arg24, Arg43, and 87-90; that span reads RVGT. A purine D-ribonucleoside is bound by residues 179 to 181 and 203 to 204; these read EME and SD. Asp204 acts as the Proton donor in catalysis.

It belongs to the PNP/UDP phosphorylase family. In terms of assembly, homohexamer; trimer of homodimers.

The catalysed reaction is a purine D-ribonucleoside + phosphate = a purine nucleobase + alpha-D-ribose 1-phosphate. The enzyme catalyses a purine 2'-deoxy-D-ribonucleoside + phosphate = a purine nucleobase + 2-deoxy-alpha-D-ribose 1-phosphate. Functionally, catalyzes the reversible phosphorolytic breakdown of the N-glycosidic bond in the beta-(deoxy)ribonucleoside molecules, with the formation of the corresponding free purine bases and pentose-1-phosphate. The protein is Purine nucleoside phosphorylase DeoD-type of Streptococcus pneumoniae (strain CGSP14).